A 98-amino-acid polypeptide reads, in one-letter code: Large ribosomal subunit protein uL23 (98 aa).

It belongs to the universal ribosomal protein uL23 family. As to quaternary structure, part of the 50S ribosomal subunit. Contacts protein L29, and trigger factor when it is bound to the ribosome.

Functionally, one of the early assembly proteins it binds 23S rRNA. One of the proteins that surrounds the polypeptide exit tunnel on the outside of the ribosome. Forms the main docking site for trigger factor binding to the ribosome. The polypeptide is Large ribosomal subunit protein uL23 (Clostridium kluyveri (strain NBRC 12016)).